The following is a 36-amino-acid chain: Cytochrome b6-f complex subunit 7 (36 aa).

Residues 9-29 (NGAFIMIGLTLLGLAWGFVII) form a helical membrane-spanning segment.

It belongs to the PetM family. As to quaternary structure, the 4 large subunits of the cytochrome b6-f complex are cytochrome b6, subunit IV (17 kDa polypeptide, PetD), cytochrome f and the Rieske protein, while the 4 small subunits are PetG, PetL, PetM and PetN. The complex functions as a dimer.

The protein localises to the cellular thylakoid membrane. Its function is as follows. Component of the cytochrome b6-f complex, which mediates electron transfer between photosystem II (PSII) and photosystem I (PSI), cyclic electron flow around PSI, and state transitions. The protein is Cytochrome b6-f complex subunit 7 of Synechocystis sp. (strain ATCC 27184 / PCC 6803 / Kazusa).